Here is a 295-residue protein sequence, read N- to C-terminus: Protease HtpX (295 aa).

Transmembrane regions (helical) follow at residues Ile4–Leu24 and Ser41–Ile61. His147 lines the Zn(2+) pocket. Glu148 is an active-site residue. His151 contacts Zn(2+). Helical transmembrane passes span Val158 to Ile178 and Ile199 to Phe219. Glu224 contributes to the Zn(2+) binding site.

It belongs to the peptidase M48B family. Zn(2+) is required as a cofactor.

Its subcellular location is the cell inner membrane. This is Protease HtpX from Pseudomonas fluorescens (strain Pf0-1).